Here is a 433-residue protein sequence, read N- to C-terminus: FAD-dependent monooxygenase notI' (433 aa).

Residues E45 and R117 each contribute to the FAD site. R195 is an active-site residue. The FAD site is built by D314 and A327.

It belongs to the paxM FAD-dependent monooxygenase family. The cofactor is FAD.

It participates in alkaloid biosynthesis. Its function is as follows. FAD-dependent monooxygenase; part of the gene cluster that mediates the biosynthesis of notoamide, a fungal indole alkaloid that belongs to a family of natural products containing a characteristic bicyclo[2.2.2]diazaoctane core. The first step of notoamide biosynthesis involves coupling of L-proline and L-tryptophan by the bimodular NRPS notE', to produce cyclo-L-tryptophan-L-proline called brevianamide F. The reverse prenyltransferase notF' then acts as a deoxybrevianamide E synthase and converts brevianamide F to deoxybrevianamide E via reverse prenylation at C-2 of the indole ring leading to the bicyclo[2.2.2]diazaoctane core. Deoxybrevianamide E is further hydroxylated at C-6 of the indole ring, likely catalyzed by the cytochrome P450 monooxygenase notG', to yield 6-hydroxy-deoxybrevianamide E. 6-hydroxy-deoxybrevianamide E is a specific substrate of the prenyltransferase notC' for normal prenylation at C-7 to produce 6-hydroxy-7-prenyl-deoxybrevianamide, also called notoamide S. As the proposed pivotal branching point in notoamide biosynthesis, notoamide S can be diverted to notoamide E through an oxidative pyran ring closure putatively catalyzed by either notH' cytochrome P450 monooxygenase or the notD' FAD-linked oxidoreductase. This step would be followed by an indole 2,3-epoxidation-initiated pinacol-like rearrangement catalyzed by the notB' FAD-dependent monooxygenase leading to the formation of notoamide C and notoamide D. On the other hand notoamide S is converted to notoamide T by notH' (or notD'), a bifunctional oxidase that also functions as the intramolecular Diels-Alderase responsible for generation of (-)-notoamide T. To generate antipodal (+)-notoaminide T, notH (or notD) in Aspergillus strain MF297-2 is expected to catalyze a Diels-Alder reaction leading to the opposite stereochemistry. The remaining oxidoreductase notD' (or notH') likely catalyzes the oxidative pyran ring formation to yield (-)-stephacidin A. The FAD-dependent monooxygenase notI' is highly similar to notB' and is predicted to catalyze a similar conversion from (-)-stephacidin A to (+)-notoamide B via the 2,3-epoxidation of (-)-stephacidin A followed by a pinacol-type rearrangement. Finally, it remains unclear which enzyme could be responsible for the final hydroxylation steps leading to notoamide A and sclerotiamide. This is FAD-dependent monooxygenase notI' from Aspergillus versicolor.